The primary structure comprises 183 residues: uncharacterized protein (183 aa).

Residues 153-175 traverse the membrane as a helical segment; that stretch reads LLYVFIRLFAGCLKVFRLCILWL.

Its subcellular location is the membrane. This is an uncharacterized protein from Saccharomyces cerevisiae (strain ATCC 204508 / S288c) (Baker's yeast).